The sequence spans 864 residues: Sine oculis-binding protein homolog (864 aa).

The segment covering 1 to 14 (MAEMEKEGRPPENK) has biased composition (basic and acidic residues). Positions 1-25 (MAEMEKEGRPPENKRSRKPAHPVKR) are disordered. 2 consecutive FCS-type zinc fingers follow at residues 142–180 (DEVSNVQIMCAWCQKVGIKRYSLSMGSEVKSFCSEKCFA) and 216–256 (FKNN…KCLN). Disordered regions lie at residues 304-360 (LTDA…ETPS), 413-484 (RGPP…PGAP), and 550-616 (KPPN…RGRG). Low complexity-rich tracts occupy residues 314 to 335 (PVAAAGQSQGPGPSSSTTVSPS) and 417 to 433 (HHASNPNSPLSNPMLPG). Positions 460–484 (IHPPSTPTMPGNPPGLLPPPPPGAP) are enriched in pro residues. Composition is skewed to low complexity over residues 565–582 (SAPGDSSAAGGKAGGRSL) and 590–603 (GSSKSADSPPGSSG). Positions 618 to 622 (VVDLT) match the SUMO interaction motif 1 (SIM); mediates the binding to polysumoylated substrates motif. S627 carries the phosphoserine modification. An SUMO interaction motif 2 (SIM); mediates the binding to polysumoylated substrates motif is present at residues 648–652 (VIDLT). K672 is covalently cross-linked (Glycyl lysine isopeptide (Lys-Gly) (interchain with G-Cter in SUMO2)). The residue at position 694 (S694) is a Phosphoserine. The segment at 725 to 750 (APAEAKGAEPPPEQPPPPAPPKKLLS) is disordered. Pro residues predominate over residues 733–745 (EPPPEQPPPPAPP).

The protein belongs to the SOBP family. Interacts (via SIM domains) with SUMO1 and SUMO2.

Its function is as follows. Implicated in development of the cochlea. The protein is Sine oculis-binding protein homolog of Rattus norvegicus (Rat).